The sequence spans 56 residues: Large ribosomal subunit protein bL32 (56 aa).

Over residues 1-16 the composition is skewed to basic residues; sequence MAVQKNRKTRSKRGMR. The interval 1–37 is disordered; sequence MAVQKNRKTRSKRGMRRSHDALGTATMSVDSTSGETH. Over residues 25–35 the composition is skewed to polar residues; it reads ATMSVDSTSGE.

It belongs to the bacterial ribosomal protein bL32 family.

This chain is Large ribosomal subunit protein bL32, found in Pseudoalteromonas atlantica (strain T6c / ATCC BAA-1087).